Consider the following 240-residue polypeptide: Triosephosphate isomerase (240 aa).

8-10 is a binding site for substrate; sequence NWK. His-93 (electrophile) is an active-site residue. Glu-160 serves as the catalytic Proton acceptor. Gly-166 lines the substrate pocket.

This sequence belongs to the triosephosphate isomerase family. Homodimer.

It localises to the cytoplasm. The enzyme catalyses D-glyceraldehyde 3-phosphate = dihydroxyacetone phosphate. It participates in carbohydrate biosynthesis; gluconeogenesis. Its pathway is carbohydrate degradation; glycolysis; D-glyceraldehyde 3-phosphate from glycerone phosphate: step 1/1. Involved in the gluconeogenesis. Catalyzes stereospecifically the conversion of dihydroxyacetone phosphate (DHAP) to D-glyceraldehyde-3-phosphate (G3P). The protein is Triosephosphate isomerase of Ehrlichia chaffeensis (strain ATCC CRL-10679 / Arkansas).